A 367-amino-acid chain; its full sequence is Peptidyl-prolyl cis-trans isomerase D (367 aa).

In terms of domain architecture, PPIase cyclophilin-type spans 7–171; it reads FFEVAIGGKT…QPVTIVDCGE (165 aa). TPR repeat units lie at residues 213–246, 264–297, and 302–335; these read IEKL…LEDY, ISCY…ETVA, and AKAL…EPAD.

Belongs to the cyclophilin-type PPIase family. PPIase D subfamily.

The protein resides in the cytoplasm. It carries out the reaction [protein]-peptidylproline (omega=180) = [protein]-peptidylproline (omega=0). In terms of biological role, PPIases accelerate the folding of proteins. It catalyzes the cis-trans isomerization of proline imidic peptide bonds in oligopeptides. This Yarrowia lipolytica (strain CLIB 122 / E 150) (Yeast) protein is Peptidyl-prolyl cis-trans isomerase D (CPR6).